A 183-amino-acid chain; its full sequence is Ribosome-recycling factor (183 aa).

The protein belongs to the RRF family.

Its subcellular location is the cytoplasm. Responsible for the release of ribosomes from messenger RNA at the termination of protein biosynthesis. May increase the efficiency of translation by recycling ribosomes from one round of translation to another. The sequence is that of Ribosome-recycling factor from Acetivibrio thermocellus (strain ATCC 27405 / DSM 1237 / JCM 9322 / NBRC 103400 / NCIMB 10682 / NRRL B-4536 / VPI 7372) (Clostridium thermocellum).